Consider the following 92-residue polypeptide: MADLLSDAEISDRLPEEWTREDDEIVRVFEFDGYLDASGFLSAAAGLAEDAWHHPEMTIRWGEVEVRLTTHDAGGITENDIDLAERLNGIHD.

Belongs to the pterin-4-alpha-carbinolamine dehydratase family.

The catalysed reaction is (4aS,6R)-4a-hydroxy-L-erythro-5,6,7,8-tetrahydrobiopterin = (6R)-L-erythro-6,7-dihydrobiopterin + H2O. This Haloarcula marismortui (strain ATCC 43049 / DSM 3752 / JCM 8966 / VKM B-1809) (Halobacterium marismortui) protein is Putative pterin-4-alpha-carbinolamine dehydratase.